A 224-amino-acid polypeptide reads, in one-letter code: Small ribosomal subunit protein uS5 (224 aa).

The disordered stretch occupies residues 1–38; the sequence is MAEQSAGGQGAPEGRDSRDSREGRGRRDGGRGGRDSDK. A compositionally biased stretch (basic and acidic residues) spans 13-38; sequence EGRDSRDSREGRGRRDGGRGGRDSDK. One can recognise an S5 DRBM domain in the interval 41–104; sequence YLERVVAINR…EEARKGFFRV (64 aa).

Belongs to the universal ribosomal protein uS5 family. As to quaternary structure, part of the 30S ribosomal subunit. Contacts proteins S4 and S8.

Functionally, with S4 and S12 plays an important role in translational accuracy. In terms of biological role, located at the back of the 30S subunit body where it stabilizes the conformation of the head with respect to the body. In Mycobacterium ulcerans (strain Agy99), this protein is Small ribosomal subunit protein uS5.